A 337-amino-acid chain; its full sequence is Ribosomal RNA small subunit methyltransferase H (337 aa).

Residues Gly-36–His-38, Asp-56, Phe-82, Asp-100, and Gln-107 each bind S-adenosyl-L-methionine. The disordered stretch occupies residues Leu-315–Gln-337.

It belongs to the methyltransferase superfamily. RsmH family.

It localises to the cytoplasm. The catalysed reaction is cytidine(1402) in 16S rRNA + S-adenosyl-L-methionine = N(4)-methylcytidine(1402) in 16S rRNA + S-adenosyl-L-homocysteine + H(+). In terms of biological role, specifically methylates the N4 position of cytidine in position 1402 (C1402) of 16S rRNA. This Xanthomonas euvesicatoria pv. vesicatoria (strain 85-10) (Xanthomonas campestris pv. vesicatoria) protein is Ribosomal RNA small subunit methyltransferase H.